Reading from the N-terminus, the 337-residue chain is Diacylglycerol acyltransferase/mycolyltransferase Ag85A (337 aa).

Residues 1–42 (MKLVDRFRGAATGTSRRLMVGAVGAALLSGLVGFVGGSATAS) form the signal peptide. 85–86 (MR) provides a ligand contact to substrate. Positions 101–111 (FEWYYQSGISV) are fibronectin-binding. An intrachain disulfide couples C130 to C135. 2 residues coordinate substrate: S169 and D197. S169 functions as the Nucleophile in the catalytic mechanism. E273 is a catalytic residue. Substrate is bound by residues 275 to 278 (FVRT), K282, and 305 to 307 (HSW). Residue H305 is part of the active site.

This sequence belongs to the mycobacterial A85 antigen family. In terms of assembly, homodimer.

Its subcellular location is the secreted. It is found in the cell wall. The protein localises to the cytoplasm. The enzyme catalyses an acyl-CoA + a 1,2-diacyl-sn-glycerol = a triacyl-sn-glycerol + CoA. It carries out the reaction 2 alpha,alpha'-trehalose 6-mycolate = alpha,alpha'-trehalose 6,6'-bismycolate + alpha,alpha-trehalose. Functionally, the antigen 85 proteins (FbpA, FbpB, FbpC) are responsible for the high affinity of mycobacteria for fibronectin, a large adhesive glycoprotein, which facilitates the attachment of M.tuberculosis to murine alveolar macrophages (AMs). They also help to maintain the integrity of the cell wall by catalyzing the transfer of mycolic acids to cell wall arabinogalactan, and through the synthesis of alpha,alpha-trehalose dimycolate (TDM, cord factor). They catalyze the transfer of a mycoloyl residue from one molecule of alpha,alpha-trehalose monomycolate (TMM) to another TMM, leading to the formation of TDM. FbpA mediates triacylglycerol (TAG) formation with long-chain acyl-CoA as the acyl donor and 1,2-dipalmitoyl-sn-glycerol (1,2-dipalmitin) as the acyl acceptor. It has a preference for C26:0-CoA over C18:1-CoA. The chain is Diacylglycerol acyltransferase/mycolyltransferase Ag85A (fbpA) from Mycobacterium ulcerans.